We begin with the raw amino-acid sequence, 428 residues long: MTWFIDRRLNGKNKSTVNRQRFLRRYKAQIKQSISEAINKRSVTDVDSGESVSIPTDDISEPMFHQGRGGLRHRVHPGNDHFIQNDRIERPQGGGGGGSGSGQGQASQDGEGQDEFVFQISKDEYLDLLFEDLALPNLKKNQHRQLNEYKTHRAGFTSNGVPANISVVRSLQNSLARRTAMTAGKRRELHALETELETISHSEPAQLLEEERLRREIAELRTKIERVPFIDTFDLRYKNYEKRPEPSSQAVMFCLMDVSGSMDQATKDMAKRFYILLYLFLSRTYKNVEVVYIRHHTQAKEVDEHEFFYSQETGGTIVSSALKLMDEVVKERYDPGQWNIYAAQASDGDNWADDSPLCHEILAKKLLPVVRYYSYIEITRRAHQTLWREYEHLQATFDNFAMQHIRDQEDIYPVFRELFQKQSANQSA.

A compositionally biased stretch (basic and acidic residues) spans 78 to 90; that stretch reads GNDHFIQNDRIER. Residues 78-111 form a disordered region; sequence GNDHFIQNDRIERPQGGGGGGSGSGQGQASQDGE. A compositionally biased stretch (gly residues) spans 92–103; it reads QGGGGGGSGSGQ.

Belongs to the UPF0229 family.

In Salmonella choleraesuis (strain SC-B67), this protein is UPF0229 protein YeaH.